The chain runs to 682 residues: PWWP domain-containing DNA repair factor 3A (682 aa).

Position 105 is a phosphoserine (Ser105). The interval 121–145 (EKTDADVASQVSSAPSPSLLGEDGQ) is disordered. A compositionally biased stretch (low complexity) spans 127 to 140 (VASQVSSAPSPSLL). Position 168 is a phosphoserine (Ser168). Disordered stretches follow at residues 179 to 318 (GPKT…GAAP) and 334 to 369 (GAGD…EEEP). Basic and acidic residues predominate over residues 203–220 (HGQESTTKKRQRNLGEKP). 2 positions are modified to phosphoserine: Ser345 and Ser346. Residues 346 to 357 (SEESTGFKSTHS) show a composition bias toward polar residues. Positions 383–444 (VGMLVWLKYQ…KHFDCKEKHA (62 aa)) constitute a PWWP domain.

It belongs to the PWWP3A family. In terms of assembly, interacts with TP53BP1 (via BRCT domain); the interaction is not dependent on its phosphorylation status. Binds nucleosomes. Interacts with trimethylated 'Lys-36' of histone H3 (H3K36me3) (in vitro).

It localises to the nucleus. Its function is as follows. Involved in the DNA damage response pathway by contributing to the maintenance of chromatin architecture. Recruited to the vicinity of DNA breaks by TP53BP1 and plays an accessory role to facilitate damage-induced chromatin changes and promoting chromatin relaxation. Required for efficient DNA repair and cell survival following DNA damage. This Mus musculus (Mouse) protein is PWWP domain-containing DNA repair factor 3A (Pwwp3a).